We begin with the raw amino-acid sequence, 445 residues long: NAD(P)H coenzyme A polysulfide/persulfide reductase (445 aa).

16-17 (AA) lines the FAD pocket. Arg-27 provides a ligand contact to CoA. FAD is bound by residues 38-39 (EA) and 45-47 (HAP). Residues 44-48 (SHAPC), 65-66 (YY), and Arg-75 each bind CoA. The active-site Redox-active is the Cys-48. FAD-binding residues include Val-85, Asp-283, and Ala-301. CoA contacts are provided by Asn-305 and Lys-361. Position 425 (Tyr-425) interacts with FAD. Positions 433 and 441 each coordinate CoA.

This sequence belongs to the class-III pyridine nucleotide-disulfide oxidoreductase family. In terms of assembly, homodimer. Homotetramer. The cofactor is FAD.

It carries out the reaction NADP(+) + 2 CoA = CoA-disulfide + NADPH + H(+). It catalyses the reaction NAD(+) + 2 CoA = CoA-disulfide + NADH + H(+). Functionally, catalyzes the NAD(P)H-dependent reduction of polysulfide, CoA-polysulfides, and CoA persulfide, as well as the reduction of a range of other small persulfides, including TNB and glutathione persulfides. The likely in vivo substrates are di-, poly-, and persulfide derivatives of coenzyme A, although polysulfide itself is also efficiently reduced. Shows coenzyme A disulfide reductase (CoADR) activity with both NADH and NADPH, with a preference for NADPH. May also play a role in the reduction of elemental sulfur. The protein is NAD(P)H coenzyme A polysulfide/persulfide reductase of Pyrococcus horikoshii (strain ATCC 700860 / DSM 12428 / JCM 9974 / NBRC 100139 / OT-3).